Here is a 369-residue protein sequence, read N- to C-terminus: Flagellar P-ring protein (369 aa).

An N-terminal signal peptide occupies residues 1–22 (MLNFKHLMAAALLLSTSLGVQA).

It belongs to the FlgI family. In terms of assembly, the basal body constitutes a major portion of the flagellar organelle and consists of four rings (L,P,S, and M) mounted on a central rod.

The protein resides in the periplasm. It localises to the bacterial flagellum basal body. Its function is as follows. Assembles around the rod to form the L-ring and probably protects the motor/basal body from shearing forces during rotation. This is Flagellar P-ring protein from Pseudomonas fluorescens (strain ATCC BAA-477 / NRRL B-23932 / Pf-5).